The sequence spans 519 residues: Maltose/maltodextrin transport system permease protein MalF (519 aa).

At 1–18 (MRKNPMDVIKKKHWWQSD) the chain is on the cytoplasmic side. The helical transmembrane segment at 19–41 (ALKWSVLGLLGLLVGYLVVLMYA) threads the bilayer. Residues 42–44 (QGE) lie on the Periplasmic side of the membrane. The chain crosses the membrane as a helical span at residues 45 to 62 (YLFAITTLILSSAGLYIF). The Cytoplasmic segment spans residues 63–74 (ANRKAYAWRYVY). A helical membrane pass occupies residues 75 to 97 (PGMAGMGLFVLFPLVCTIAIAFT). Residues 98–288 (NYSSTNQLTF…QKPFLAIFVW (191 aa)) are Periplasmic-facing. The region spanning 286–510 (FVWTVVFSLI…LLVGALAIVN (225 aa)) is the ABC transmembrane type-1 domain. The helical transmembrane segment at 289–311 (TVVFSLITVFLTVAVGMVLACLV) threads the bilayer. At 312 to 323 (QWEALRGKAVYR) the chain is on the cytoplasmic side. The helical transmembrane segment at 324–346 (VLLILPYAVPSFISILIFKGLFN) threads the bilayer. The Periplasmic portion of the chain corresponds to 347–374 (QSFGEINMMLSALFGVKPAWFSDPTTAR). The helical transmembrane segment at 375–397 (TMLIIVNTWLGYPYMMILCMGLL) threads the bilayer. The Cytoplasmic portion of the chain corresponds to 398–417 (KAIPDDLYEASAMDGAGPFQ). A helical membrane pass occupies residues 418–440 (NFFKITLPLLIKPLTPLMIASFA). Residues 441–488 (FNFNNFVLIQLLTNGGPDRLGTTTPAGYTDLLVNYTYRIAFEGGGGQD) lie on the Periplasmic side of the membrane. The chain crosses the membrane as a helical span at residues 489-511 (FGLAAAIATLIFLLVGALAIVNL). The Cytoplasmic segment spans residues 512–519 (KATRMKFD).

This sequence belongs to the binding-protein-dependent transport system permease family. MalFG subfamily. The complex is composed of two ATP-binding proteins (MalK), two transmembrane proteins (MalG and MalF) and a solute-binding protein (MalE).

Its subcellular location is the cell inner membrane. In terms of biological role, part of the ABC transporter complex MalEFGK involved in maltose/maltodextrin import. Probably responsible for the translocation of the substrate across the membrane. This chain is Maltose/maltodextrin transport system permease protein MalF (malF), found in Escherichia coli O6:H1 (strain CFT073 / ATCC 700928 / UPEC).